We begin with the raw amino-acid sequence, 360 residues long: Histidinol-phosphate aminotransferase (360 aa).

Lys222 bears the N6-(pyridoxal phosphate)lysine mark.

Belongs to the class-II pyridoxal-phosphate-dependent aminotransferase family. Histidinol-phosphate aminotransferase subfamily. In terms of assembly, homodimer. It depends on pyridoxal 5'-phosphate as a cofactor.

It catalyses the reaction L-histidinol phosphate + 2-oxoglutarate = 3-(imidazol-4-yl)-2-oxopropyl phosphate + L-glutamate. The protein operates within amino-acid biosynthesis; L-histidine biosynthesis; L-histidine from 5-phospho-alpha-D-ribose 1-diphosphate: step 7/9. This is Histidinol-phosphate aminotransferase from Listeria monocytogenes serotype 4b (strain CLIP80459).